Reading from the N-terminus, the 473-residue chain is MKTLYSLRRFYHVETLFNGTLALAGRDQETTGFAWWAGNARLINLSGKLLGAHVAHAGLIVFWAGAMNLFEVAHFVPEKPMYEQGLILLPHLATLGWGVGPGGEVIDTFPYFVSGVLHLISSAVLGFGGIYHALLGPETLEESFPFFGYVWKDRNKMTTILGIHLILLGIGAFLLVLKALYFGGVYDTWAPGGGDVRKIANLTLSPSLIFGYLLKSPFGGEGWIVSVDDLEDIIGGHVWLGSICILGGIWHILTKPFAWARRAFVWSGEAYLSYSLGALSIFGFTACCFVWFNNTAYPSEFYGPTGPEASQAQAFTFLVRDQRLGANVGSAQGPTGLGKYLMRSPTGEVIFGGETMRFWDLRAPWLEPLRGPNGLDLNRLKKDIQPWQERRSAEYMTHAPLGSLNSVGGVATEINAVNYVSPRSWLATSHFVLGFFFFIGHLWHAGRARAAAAGFEKGIDRDFEPVLSMTPLN.

Positions M1–E14 are excised as a propeptide. The residue at position 15 (T15) is an N-acetylthreonine. T15 bears the Phosphothreonine mark. 5 helical membrane-spanning segments follow: residues L69–A93, L134–N155, K178–A200, K255–S275, and W291–A312. Position 367 (E367) interacts with [CaMn4O5] cluster. A helical transmembrane segment spans residues R447–P471.

It belongs to the PsbB/PsbC family. PsbC subfamily. As to quaternary structure, PSII is composed of 1 copy each of membrane proteins PsbA, PsbB, PsbC, PsbD, PsbE, PsbF, PsbH, PsbI, PsbJ, PsbK, PsbL, PsbM, PsbT, PsbX, PsbY, PsbZ, Psb30/Ycf12, at least 3 peripheral proteins of the oxygen-evolving complex and a large number of cofactors. It forms dimeric complexes. The cofactor is Binds multiple chlorophylls and provides some of the ligands for the Ca-4Mn-5O cluster of the oxygen-evolving complex. It may also provide a ligand for a Cl- that is required for oxygen evolution. PSII binds additional chlorophylls, carotenoids and specific lipids..

It is found in the plastid membrane. Its function is as follows. One of the components of the core complex of photosystem II (PSII). It binds chlorophyll and helps catalyze the primary light-induced photochemical processes of PSII. PSII is a light-driven water:plastoquinone oxidoreductase, using light energy to abstract electrons from H(2)O, generating O(2) and a proton gradient subsequently used for ATP formation. The polypeptide is Photosystem II CP43 reaction center protein (Cuscuta exaltata (Tall dodder)).